We begin with the raw amino-acid sequence, 258 residues long: 5'-nucleotidase SurE (258 aa).

4 residues coordinate a divalent metal cation: aspartate 10, aspartate 11, serine 41, and asparagine 96.

Belongs to the SurE nucleotidase family. It depends on a divalent metal cation as a cofactor.

It localises to the cytoplasm. The catalysed reaction is a ribonucleoside 5'-phosphate + H2O = a ribonucleoside + phosphate. Functionally, nucleotidase that shows phosphatase activity on nucleoside 5'-monophosphates. The polypeptide is 5'-nucleotidase SurE (Sorangium cellulosum (strain So ce56) (Polyangium cellulosum (strain So ce56))).